The following is a 253-amino-acid chain: Indole-3-glycerol phosphate synthase (253 aa).

It belongs to the TrpC family.

The enzyme catalyses 1-(2-carboxyphenylamino)-1-deoxy-D-ribulose 5-phosphate + H(+) = (1S,2R)-1-C-(indol-3-yl)glycerol 3-phosphate + CO2 + H2O. It participates in amino-acid biosynthesis; L-tryptophan biosynthesis; L-tryptophan from chorismate: step 4/5. The chain is Indole-3-glycerol phosphate synthase from Petrotoga mobilis (strain DSM 10674 / SJ95).